A 453-amino-acid polypeptide reads, in one-letter code: DNA repair protein RadA (453 aa).

The C4-type zinc-finger motif lies at 10–27; it reads CQECGYQSPKYLGRCPNC. 95 to 102 contacts ATP; it reads GDPGIGKS. A RadA KNRFG motif motif is present at residues 251–255; sequence KNRFG. A lon-protease-like region spans residues 350-453; it reads DAYLKSAGGV…VGQVLKAVFS (104 aa).

Belongs to the RecA family. RadA subfamily.

In terms of biological role, DNA-dependent ATPase involved in processing of recombination intermediates, plays a role in repairing DNA breaks. Stimulates the branch migration of RecA-mediated strand transfer reactions, allowing the 3' invading strand to extend heteroduplex DNA faster. Binds ssDNA in the presence of ADP but not other nucleotides, has ATPase activity that is stimulated by ssDNA and various branched DNA structures, but inhibited by SSB. Does not have RecA's homology-searching function. In Streptococcus pyogenes serotype M6 (strain ATCC BAA-946 / MGAS10394), this protein is DNA repair protein RadA.